Reading from the N-terminus, the 292-residue chain is 5,10-methylenetetrahydrofolate reductase (292 aa).

Glutamate 28 serves as the catalytic Proton donor/acceptor. Residue threonine 59 coordinates NADH. Tyrosine 60, alanine 62, histidine 88, arginine 118, glycine 119, aspartate 120, alanine 132, tyrosine 152, histidine 156, aspartate 165, asparagine 168, lysine 171, and lysine 172 together coordinate FAD. Position 120 (aspartate 120) interacts with (6S)-5-methyl-5,6,7,8-tetrahydrofolate. Glutamine 183 contacts NADH. (6S)-5-methyl-5,6,7,8-tetrahydrofolate-binding residues include glutamine 183, glutamine 219, and lysine 279.

This sequence belongs to the methylenetetrahydrofolate reductase family. FAD serves as cofactor.

It carries out the reaction (6S)-5-methyl-5,6,7,8-tetrahydrofolate + NAD(+) = (6R)-5,10-methylene-5,6,7,8-tetrahydrofolate + NADH + H(+). The protein operates within one-carbon metabolism; tetrahydrofolate interconversion. Its pathway is amino-acid biosynthesis; L-methionine biosynthesis via de novo pathway. Catalyzes the NADH-dependent reduction of 5,10-methylenetetrahydrofolate to 5-methyltetrahydrofolate. Is required to provide the methyl group necessary for methionine synthetase to convert homocysteine to methionine; the methyl group is given by 5-methyltetrahydrofolate. In Buchnera aphidicola subsp. Schizaphis graminum (strain Sg), this protein is 5,10-methylenetetrahydrofolate reductase (metF).